Consider the following 323-residue polypeptide: Magnesium transporter NIPA1 (323 aa).

At 1-21 the chain is on the extracellular side; that stretch reads MGTAAAAAAAGEGARGPSPAA. A helical transmembrane segment spans residues 22 to 42; sequence VSLGLGVAVVSSLVNGSTFVL. The Cytoplasmic segment spans residues 43 to 60; that stretch reads QKKGIVRAKRRGTSYLTD. The helical transmembrane segment at 61-81 threads the bilayer; the sequence is IVWWAGTIAMAVGQIGNFLAY. A topological domain (extracellular) is located at residue threonine 82. Residues 83–103 form a helical membrane-spanning segment; the sequence is AVPTVLVTPLGALGVPFGSIL. The Cytoplasmic segment spans residues 104–111; the sequence is ASYLLKEK. A helical membrane pass occupies residues 112–132; sequence LNILGKLGCLLSCAGSVVLII. Over 133–153 the chain is Extracellular; the sequence is HSPKSESVTTQAELEEKLTNP. Residues 154–174 traverse the membrane as a helical segment; that stretch reads VFVGYLCIVLLMLLLLIFWIA. Residues 175–177 are Cytoplasmic-facing; it reads PAH. The helical transmembrane segment at 178–198 threads the bilayer; the sequence is GPTNIMVYISICSLLGSFTVP. Residues 199–218 lie on the Extracellular side of the membrane; sequence STKGIGLAAQDILHNNPSSQ. A helical transmembrane segment spans residues 219–239; the sequence is RALCLCLVLLAVLGCSIIVQF. The Cytoplasmic portion of the chain corresponds to 240–253; sequence RYINKALECFDSSV. The helical transmembrane segment at 254–274 threads the bilayer; the sequence is FGAIYYVVFTTLVLLASAILF. Topologically, residues 275–284 are extracellular; the sequence is REWSNVGLVD. Residues 285–305 form a helical membrane-spanning segment; that stretch reads FLGMACGFTTVSVGIVLIQVF. Residues 306 to 323 lie on the Cytoplasmic side of the membrane; it reads KEFNFNLGEMNKSNMKTD.

The protein belongs to the NIPA family. As to quaternary structure, homodimer. In terms of tissue distribution, widely expressed. Predominantly expressed in neuronal tissues. Brain, heart, kidney, liver and colon (at protein level).

The protein resides in the cell membrane. It localises to the early endosome. The enzyme catalyses Mg(2+)(in) = Mg(2+)(out). Its function is as follows. Acts as a Mg(2+) transporter. Can also transport other divalent cations such as Fe(2+), Sr(2+), Ba(2+), Zn(2+) and Co(2+) but to a much less extent than Mg(2+). This is Magnesium transporter NIPA1 (Nipa1) from Mus musculus (Mouse).